The primary structure comprises 77 residues: U3-theraphotoxin-Hhn1k (77 aa).

Residues 1 to 14 (TFAGLVLLFVVCYA) form the signal peptide. Positions 15-42 (SESEEKEFPKEMLSSIFAVDNDFKQEER) are excised as a propeptide. 2 disulfide bridges follow: Cys-44-Cys-57 and Cys-56-Cys-69.

It belongs to the neurotoxin 10 (Hwtx-1) family. 51 (Hntx-8) subfamily. Hntx-8 sub-subfamily. Expressed by the venom gland.

It localises to the secreted. Ion channel inhibitor. This chain is U3-theraphotoxin-Hhn1k, found in Cyriopagopus hainanus (Chinese bird spider).